The primary structure comprises 979 residues: Pro-apoptotic serine protease NMA111 (979 aa).

Residues 1-20 (MTIMNEGKKRSHSSSSDDHL) are disordered. The interval 65-255 (VVSIHFAQVA…LPLDRILRAL (191 aa)) is serine protease. Residues histidine 103, aspartate 134, and serine 217 each act as charge relay system in the active site. PDZ domains are found at residues 273–361 (WLLK…RGGT) and 750–836 (SILH…VRDG).

The protein belongs to the peptidase S1C family.

The protein resides in the nucleus. In terms of biological role, nuclear serine protease which mediates apoptosis. In Candida glabrata (strain ATCC 2001 / BCRC 20586 / JCM 3761 / NBRC 0622 / NRRL Y-65 / CBS 138) (Yeast), this protein is Pro-apoptotic serine protease NMA111 (NMA111).